Consider the following 409-residue polypeptide: LL-diaminopimelate aminotransferase (409 aa).

Substrate is bound by residues Y15 and G42. Pyridoxal 5'-phosphate is bound by residues Y72, 108–109 (AK), Y132, N186, Y217, and 245–247 (SFS). Residues K109, Y132, and N186 each coordinate substrate. Position 248 is an N6-(pyridoxal phosphate)lysine (K248). Positions 256 and 291 each coordinate pyridoxal 5'-phosphate. N291 and R385 together coordinate substrate.

The protein belongs to the class-I pyridoxal-phosphate-dependent aminotransferase family. LL-diaminopimelate aminotransferase subfamily. In terms of assembly, homodimer. Pyridoxal 5'-phosphate serves as cofactor.

The enzyme catalyses (2S,6S)-2,6-diaminopimelate + 2-oxoglutarate = (S)-2,3,4,5-tetrahydrodipicolinate + L-glutamate + H2O + H(+). It functions in the pathway amino-acid biosynthesis; L-lysine biosynthesis via DAP pathway; LL-2,6-diaminopimelate from (S)-tetrahydrodipicolinate (aminotransferase route): step 1/1. Functionally, involved in the synthesis of meso-diaminopimelate (m-DAP or DL-DAP), required for both lysine and peptidoglycan biosynthesis. Catalyzes the direct conversion of tetrahydrodipicolinate to LL-diaminopimelate. This chain is LL-diaminopimelate aminotransferase, found in Desulfosudis oleivorans (strain DSM 6200 / JCM 39069 / Hxd3) (Desulfococcus oleovorans).